The primary structure comprises 1161 residues: BMP-2-inducible protein kinase (1161 aa).

The disordered stretch occupies residues 1 to 20; that stretch reads MKKFSRMPKSEGGSGGGAAG. Ser-14 is modified (phosphoserine). Positions 51-316 constitute a Protein kinase domain; that stretch reads VTLEESLAEG…DIFQVSYFAF (266 aa). Residues 57 to 65 and Lys-79 contribute to the ATP site; that span reads LAEGGFSTV. Asp-180 functions as the Proton acceptor in the catalytic mechanism. Disordered regions lie at residues 358 to 439, 453 to 495, 610 to 630, and 655 to 832; these read TDTI…RVLQ, LQHR…HHHL, TNQKNISNPPDMSGWNPFGED, and ERAS…TQDL. Over residues 361-394 the composition is skewed to polar residues; it reads IGPTETSIAPRQRPKANSATTATPSVLTIQSSAT. Composition is skewed to low complexity over residues 422-439 and 460-485; these read LLGQGPPQQPPQQHRVLQ and QQQQQQQQQQQQQQQQQQQQQQQQQQ. Residues 610–619 are compositionally biased toward polar residues; the sequence is TNQKNISNPP. The residue at position 689 (Ser-689) is a Phosphoserine. Composition is skewed to polar residues over residues 697–718 and 726–735; these read SSINQENGTANPIKNGKTSPAS and KTSVQGQVQK. The residue at position 742 (Ser-742) is a Phosphoserine. Residues 755–779 are compositionally biased toward acidic residues; the sequence is EEEEQDDEEVLQGEQGDFNDDDTEP. A compositionally biased stretch (basic and acidic residues) spans 798–813; the sequence is EKHSSDSDYEQAKAKY. Phosphoserine is present on residues Ser-817 and Ser-818. Residue Thr-834 is modified to Phosphothreonine. Ser-928 carries the post-translational modification Phosphoserine. Residues 965-1035 are disordered; the sequence is SQQQKVKQRS…RRDSQSSNEF (71 aa). Residues 970–984 are compositionally biased toward basic residues; it reads VKQRSLQKLSSRQRR. Over residues 1000 to 1011 the composition is skewed to low complexity; it reads TPTSTKKTLKPT. A phosphoserine mark is found at Ser-1029, Ser-1031, Ser-1032, Ser-1039, Ser-1041, Ser-1076, Ser-1107, and Ser-1111. The segment covering 1137-1146 has biased composition (polar residues); the sequence is TPHQSQQSQP. Residues 1137–1161 form a disordered region; the sequence is TPHQSQQSQPVELDPFGAAPFPSKQ.

It belongs to the protein kinase superfamily. Ser/Thr protein kinase family. Post-translationally, autophosphorylated.

The protein resides in the nucleus. It catalyses the reaction L-seryl-[protein] + ATP = O-phospho-L-seryl-[protein] + ADP + H(+). The enzyme catalyses L-threonyl-[protein] + ATP = O-phospho-L-threonyl-[protein] + ADP + H(+). Functionally, may be involved in osteoblast differentiation. This Homo sapiens (Human) protein is BMP-2-inducible protein kinase (BMP2K).